Here is a 756-residue protein sequence, read N- to C-terminus: Polyribonucleotide nucleotidyltransferase (756 aa).

Residues D492 and D498 each coordinate Mg(2+). Residues 559 to 618 (PQHAEVFVNPDVIRIIIGPGGKNIKAITAATGASIDIEDSGKVSIFAPTYEAMEMAREMV) enclose the KH domain. Residues 628 to 702 (GKNYVGKVRK…SRKAVLLEEQ (75 aa)) enclose the S1 motif domain. A disordered region spans residues 703 to 756 (GVEWNPEDTARPSGPPRDRGDRGDRGGRGDRGGDRRGGDRGGRGGDRGRGGDRR). A compositionally biased stretch (basic and acidic residues) spans 718–756 (PRDRGDRGDRGGRGDRGGDRRGGDRGGRGGDRGRGGDRR).

Belongs to the polyribonucleotide nucleotidyltransferase family. Mg(2+) is required as a cofactor.

Its subcellular location is the cytoplasm. The catalysed reaction is RNA(n+1) + phosphate = RNA(n) + a ribonucleoside 5'-diphosphate. Involved in mRNA degradation. Catalyzes the phosphorolysis of single-stranded polyribonucleotides processively in the 3'- to 5'-direction. In Nitratidesulfovibrio vulgaris (strain DSM 19637 / Miyazaki F) (Desulfovibrio vulgaris), this protein is Polyribonucleotide nucleotidyltransferase.